The chain runs to 179 residues: Lipoprotein signal peptidase (179 aa).

Helical transmembrane passes span L10–I30, V48–F68, W75–L95, and N101–I121. Residues D131 and D149 contribute to the active site. A helical transmembrane segment spans residues H141 to I161.

This sequence belongs to the peptidase A8 family.

It is found in the cell inner membrane. It carries out the reaction Release of signal peptides from bacterial membrane prolipoproteins. Hydrolyzes -Xaa-Yaa-Zaa-|-(S,diacylglyceryl)Cys-, in which Xaa is hydrophobic (preferably Leu), and Yaa (Ala or Ser) and Zaa (Gly or Ala) have small, neutral side chains.. It participates in protein modification; lipoprotein biosynthesis (signal peptide cleavage). In terms of biological role, this protein specifically catalyzes the removal of signal peptides from prolipoproteins. This chain is Lipoprotein signal peptidase, found in Acinetobacter baylyi (strain ATCC 33305 / BD413 / ADP1).